Consider the following 536-residue polypeptide: Phosphoenolpyruvate carboxykinase (ATP) (536 aa).

Arg61, Tyr195, and Lys201 together coordinate substrate. Residues Lys201, His220, and 236–244 each bind ATP; that span reads GLSGTGKTT. 2 residues coordinate Mn(2+): Lys201 and His220. Mn(2+) is bound at residue Asp257. Positions 285, 322, and 447 each coordinate ATP. Substrate is bound at residue Arg322.

Belongs to the phosphoenolpyruvate carboxykinase (ATP) family. Requires Mn(2+) as cofactor.

The protein resides in the cytoplasm. The enzyme catalyses oxaloacetate + ATP = phosphoenolpyruvate + ADP + CO2. Its pathway is carbohydrate biosynthesis; gluconeogenesis. Functionally, involved in the gluconeogenesis. Catalyzes the conversion of oxaloacetate (OAA) to phosphoenolpyruvate (PEP) through direct phosphoryl transfer between the nucleoside triphosphate and OAA. The chain is Phosphoenolpyruvate carboxykinase (ATP) from Agrobacterium fabrum (strain C58 / ATCC 33970) (Agrobacterium tumefaciens (strain C58)).